Here is a 784-residue protein sequence, read N- to C-terminus: LPS-assembly protein LptD (784 aa).

The N-terminal stretch at 1–24 (MKKRIPTLLATMIATALYSQQGLA) is a signal peptide. 2 disulfide bridges follow: Cys31/Cys724 and Cys173/Cys725.

The protein belongs to the LptD family. In terms of assembly, component of the lipopolysaccharide transport and assembly complex. Interacts with LptE and LptA. Contains two intramolecular disulfide bonds.

Its subcellular location is the cell outer membrane. Together with LptE, is involved in the assembly of lipopolysaccharide (LPS) at the surface of the outer membrane. In Shigella flexneri, this protein is LPS-assembly protein LptD.